A 380-amino-acid polypeptide reads, in one-letter code: Glucose-1-phosphate adenylyltransferase (380 aa).

Residues Gly-164, 179 to 180 (EK), and Ser-190 each bind alpha-D-glucose 1-phosphate.

Belongs to the bacterial/plant glucose-1-phosphate adenylyltransferase family. Homotetramer.

The enzyme catalyses alpha-D-glucose 1-phosphate + ATP + H(+) = ADP-alpha-D-glucose + diphosphate. Its pathway is glycan biosynthesis; glycogen biosynthesis. Its function is as follows. Involved in the biosynthesis of ADP-glucose, a building block required for the elongation reactions to produce glycogen. Catalyzes the reaction between ATP and alpha-D-glucose 1-phosphate (G1P) to produce pyrophosphate and ADP-Glc. This chain is Glucose-1-phosphate adenylyltransferase, found in Lactococcus lactis subsp. cremoris (strain MG1363).